Reading from the N-terminus, the 491-residue chain is Probable cytosol aminopeptidase (491 aa).

2 residues coordinate Mn(2+): K263 and D268. The active site involves K275. Mn(2+)-binding residues include D286, D345, and E347. R349 is an active-site residue.

Belongs to the peptidase M17 family. It depends on Mn(2+) as a cofactor.

Its subcellular location is the cytoplasm. The enzyme catalyses Release of an N-terminal amino acid, Xaa-|-Yaa-, in which Xaa is preferably Leu, but may be other amino acids including Pro although not Arg or Lys, and Yaa may be Pro. Amino acid amides and methyl esters are also readily hydrolyzed, but rates on arylamides are exceedingly low.. It catalyses the reaction Release of an N-terminal amino acid, preferentially leucine, but not glutamic or aspartic acids.. In terms of biological role, presumably involved in the processing and regular turnover of intracellular proteins. Catalyzes the removal of unsubstituted N-terminal amino acids from various peptides. This Haemophilus influenzae (strain PittGG) protein is Probable cytosol aminopeptidase.